The chain runs to 206 residues: Thiamine-phosphate synthase (206 aa).

Residues 38–42 and Asn-70 each bind 4-amino-2-methyl-5-(diphosphooxymethyl)pyrimidine; that span reads QLREK. Mg(2+) is bound by residues Asp-71 and Asp-90. 4-amino-2-methyl-5-(diphosphooxymethyl)pyrimidine is bound at residue Thr-109. 135 to 137 serves as a coordination point for 2-[(2R,5Z)-2-carboxy-4-methylthiazol-5(2H)-ylidene]ethyl phosphate; it reads TST. Lys-138 serves as a coordination point for 4-amino-2-methyl-5-(diphosphooxymethyl)pyrimidine. Residues Gly-165 and 185 to 186 contribute to the 2-[(2R,5Z)-2-carboxy-4-methylthiazol-5(2H)-ylidene]ethyl phosphate site; that span reads VS.

Belongs to the thiamine-phosphate synthase family. Mg(2+) is required as a cofactor.

It carries out the reaction 2-[(2R,5Z)-2-carboxy-4-methylthiazol-5(2H)-ylidene]ethyl phosphate + 4-amino-2-methyl-5-(diphosphooxymethyl)pyrimidine + 2 H(+) = thiamine phosphate + CO2 + diphosphate. The enzyme catalyses 2-(2-carboxy-4-methylthiazol-5-yl)ethyl phosphate + 4-amino-2-methyl-5-(diphosphooxymethyl)pyrimidine + 2 H(+) = thiamine phosphate + CO2 + diphosphate. It catalyses the reaction 4-methyl-5-(2-phosphooxyethyl)-thiazole + 4-amino-2-methyl-5-(diphosphooxymethyl)pyrimidine + H(+) = thiamine phosphate + diphosphate. The protein operates within cofactor biosynthesis; thiamine diphosphate biosynthesis; thiamine phosphate from 4-amino-2-methyl-5-diphosphomethylpyrimidine and 4-methyl-5-(2-phosphoethyl)-thiazole: step 1/1. In terms of biological role, condenses 4-methyl-5-(beta-hydroxyethyl)thiazole monophosphate (THZ-P) and 2-methyl-4-amino-5-hydroxymethyl pyrimidine pyrophosphate (HMP-PP) to form thiamine monophosphate (TMP). The sequence is that of Thiamine-phosphate synthase from Fusobacterium nucleatum subsp. nucleatum (strain ATCC 25586 / DSM 15643 / BCRC 10681 / CIP 101130 / JCM 8532 / KCTC 2640 / LMG 13131 / VPI 4355).